The chain runs to 685 residues: Methionine--tRNA ligase (685 aa).

Zn(2+) is bound by residues Cys142, Cys145, Cys155, and Cys158. The 'KMSKS' region motif lies at 330–334 (KMSKS). Lys333 is an ATP binding site. The tRNA-binding domain maps to 584–685 (DFIKVDLRVA…SGAKPGDKVS (102 aa)).

This sequence belongs to the class-I aminoacyl-tRNA synthetase family. MetG type 1 subfamily. Homodimer. It depends on Zn(2+) as a cofactor.

The protein resides in the cytoplasm. The enzyme catalyses tRNA(Met) + L-methionine + ATP = L-methionyl-tRNA(Met) + AMP + diphosphate. Its function is as follows. Is required not only for elongation of protein synthesis but also for the initiation of all mRNA translation through initiator tRNA(fMet) aminoacylation. In Acinetobacter baylyi (strain ATCC 33305 / BD413 / ADP1), this protein is Methionine--tRNA ligase.